Reading from the N-terminus, the 389-residue chain is MHTSTEARMGMRAALTGFAVLMLLQSCSAYKLVCYFTSWSQYREGVGSFLPDAIQPFLCTHIIYSFANISSDNMLSTWEWNDESNYDKLNKLKTRNTNLKTLLSVGGWKFGEKRFSEIASNTERRTAFVRSVAPFLRSYGFDGLDLAWLYPRLRDKQYFSTLIKELNAEFTKEVQPGREKLLLSAALSAGKVAIDTGYDIAQIAQHLDFINLMTYDFHGVWRQITGHHSPLFQGQKDTRFDRYSNVNYAVQYMIRLGAQASKLLMGIPTFGKSFTLASSENQLGAPISGEGLPGRFTKEAGTLAYYEICDFLKGAEVHRLSNEKVPFATKGNQWVGYEDKESVKNKVGFLKEKKLAGAMVWALDLDDFQGTCQPKEFFPLTNAIKDALA.

The signal sequence occupies residues 1–29 (MHTSTEARMGMRAALTGFAVLMLLQSCSA). Residues 30–389 (YKLVCYFTSW…LTNAIKDALA (360 aa)) enclose the GH18 domain. Cys-34 and Cys-59 are joined by a disulfide. N-linked (GlcNAc...) asparagine glycosylation occurs at Asn-68. Chitin is bound by residues 79-80 (EW), 106-109 (GGWK), Tyr-150, and 213-216 (MTYD). Cysteines 309 and 372 form a disulfide. Residues 333–347 (QWVGYEDKESVKNKV) form an important for AKT1 activation and IL8 production region. Trp-361 provides a ligand contact to chitin.

This sequence belongs to the glycosyl hydrolase 18 family. In terms of assembly, monomer. Detected in lung in pulmonary macrophages and alveolar type 2 cells and in bronchoalveolar lavage (BAL) fluids. Expressed in mammary tumor cells (at protein level). Expressed in lung. Not detected in non-inflammatory colon.

Its subcellular location is the secreted. The protein resides in the extracellular space. It is found in the cytoplasm. The protein localises to the endoplasmic reticulum. Its function is as follows. Carbohydrate-binding lectin with a preference for chitin. Has no chitinase activity. May play a role in tissue remodeling and in the capacity of cells to respond to and cope with changes in their environment. Plays a role in T-helper cell type 2 (Th2) inflammatory response and IL-13-induced inflammation, regulating allergen sensitization, inflammatory cell apoptosis, dendritic cell accumulation and M2 macrophage differentiation. Facilitates invasion of pathogenic enteric bacteria into colonic mucosa and lymphoid organs. Mediates activation of AKT1 signaling pathway and subsequent IL8 production in colonic epithelial cells. Regulates antibacterial responses in lung by contributing to macrophage bacterial killing, controlling bacterial dissemination and augmenting host tolerance. Also regulates hyperoxia-induced injury, inflammation and epithelial apoptosis in lung. The sequence is that of Chitinase-3-like protein 1 (Chi3l1) from Mus musculus (Mouse).